A 395-amino-acid polypeptide reads, in one-letter code: Dihydrolipoyllysine-residue succinyltransferase component of 2-oxoglutarate dehydrogenase complex (395 aa).

The region spanning 2–77 (RVKIIVPSLG…AVGEEIGEIN (76 aa)) is the Lipoyl-binding domain. At lysine 43 the chain carries N6-lipoyllysine. The 38-residue stretch at 111–148 (TLAPSVQKLVTENKLDPNNIKGTGRDGRITKGDVLATI) folds into the Peripheral subunit-binding (PSBD) domain. Residues histidine 366 and aspartate 370 contribute to the active site.

This sequence belongs to the 2-oxoacid dehydrogenase family. Forms a 24-polypeptide structural core with octahedral symmetry. Part of the 2-oxoglutarate dehydrogenase (OGDH) complex composed of E1 (2-oxoglutarate dehydrogenase), E2 (dihydrolipoamide succinyltransferase) and E3 (dihydrolipoamide dehydrogenase); the complex contains multiple copies of the three enzymatic components (E1, E2 and E3). Requires (R)-lipoate as cofactor.

It carries out the reaction N(6)-[(R)-dihydrolipoyl]-L-lysyl-[protein] + succinyl-CoA = N(6)-[(R)-S(8)-succinyldihydrolipoyl]-L-lysyl-[protein] + CoA. It functions in the pathway amino-acid degradation; L-lysine degradation via saccharopine pathway; glutaryl-CoA from L-lysine: step 6/6. Its function is as follows. E2 component of the 2-oxoglutarate dehydrogenase (OGDH) complex which catalyzes the second step in the conversion of 2-oxoglutarate to succinyl-CoA and CO(2). In Rickettsia conorii (strain ATCC VR-613 / Malish 7), this protein is Dihydrolipoyllysine-residue succinyltransferase component of 2-oxoglutarate dehydrogenase complex (sucB).